Reading from the N-terminus, the 431-residue chain is Adenylosuccinate synthetase (431 aa).

GTP-binding positions include 13-19 and 41-43; these read GDEGKGK and GHT. Asp14 serves as the catalytic Proton acceptor. Positions 14 and 41 each coordinate Mg(2+). Residues 14 to 17, 39 to 42, Thr130, Arg144, Gln225, Thr240, and Arg304 each bind IMP; these read DEGK and NAGH. His42 serves as the catalytic Proton donor. 300-306 is a binding site for substrate; the sequence is ATTGRKR. GTP is bound by residues Arg306, 332-334, and 415-417; these read KLD and STG.

The protein belongs to the adenylosuccinate synthetase family. In terms of assembly, homodimer. It depends on Mg(2+) as a cofactor.

It localises to the cytoplasm. It carries out the reaction IMP + L-aspartate + GTP = N(6)-(1,2-dicarboxyethyl)-AMP + GDP + phosphate + 2 H(+). Its pathway is purine metabolism; AMP biosynthesis via de novo pathway; AMP from IMP: step 1/2. Its function is as follows. Plays an important role in the de novo pathway of purine nucleotide biosynthesis. Catalyzes the first committed step in the biosynthesis of AMP from IMP. In Shewanella loihica (strain ATCC BAA-1088 / PV-4), this protein is Adenylosuccinate synthetase.